The following is a 425-amino-acid chain: Glutamyl-tRNA reductase (425 aa).

Residues 49–52, Ser109, 114–116, and Gln120 contribute to the substrate site; these read TCNR and EGQ. Residue Cys50 is the Nucleophile of the active site. NADP(+) is bound at residue 189–194; it reads GAGETG.

It belongs to the glutamyl-tRNA reductase family. As to quaternary structure, homodimer.

It carries out the reaction (S)-4-amino-5-oxopentanoate + tRNA(Glu) + NADP(+) = L-glutamyl-tRNA(Glu) + NADPH + H(+). It functions in the pathway porphyrin-containing compound metabolism; protoporphyrin-IX biosynthesis; 5-aminolevulinate from L-glutamyl-tRNA(Glu): step 1/2. It participates in porphyrin-containing compound metabolism; chlorophyll biosynthesis. Functionally, catalyzes the NADPH-dependent reduction of glutamyl-tRNA(Glu) to glutamate 1-semialdehyde (GSA). This is Glutamyl-tRNA reductase from Pelodictyon phaeoclathratiforme (strain DSM 5477 / BU-1).